The sequence spans 509 residues: Zinc finger CCCH-type with G patch domain-containing protein (509 aa).

A C3H1-type zinc finger spans residues 155-178 (PCNYYLEGECRFDEIRCRYSHGAL). A disordered region spans residues 254–277 (EDELTSEDSSSSPHDESSDEIDSD). The 47-residue stretch at 310–356 (TRGIGSKLMEKMGYIHGTGLGSEGRGIVTPVSAQILPQGRSLDACME) folds into the G-patch domain. A disordered region spans residues 407–430 (LGGGESRHQGDQAAKKAKTNDLQQ). The segment covering 411–420 (ESRHQGDQAA) has biased composition (basic and acidic residues).

The protein resides in the nucleus. Transcription repressor. The sequence is that of Zinc finger CCCH-type with G patch domain-containing protein from Drosophila pseudoobscura pseudoobscura (Fruit fly).